The chain runs to 3856 residues: Serine/threonine-protein kinase ATM (3856 aa).

Residues 108–162 enclose the PWWP domain; sequence VGNLVWVMTKYKKWWPGEVVDFKADAKESFMVRSIGQSHLVSWFASSKLKPFKES. The segment at 648–681 is disordered; sequence GIPDLNGTNTEPTLVLPQVEPTQRRRRRKKEESP. The FAT domain occupies 2727-3393; that stretch reads VVAGSAVVCG…ILQLLALANG (667 aa). The Bipartite nuclear localization signal motif lies at 3233–3249; the sequence is RKHKTKELEVFIKRFKS. The 313-residue stretch at 3499-3811 folds into the PI3K/PI4K catalytic domain; sequence LSDSVTVMNG…GNKDATRALM (313 aa). A G-loop region spans residues 3505-3511; it reads VMNGINA. The interval 3678 to 3686 is catalytic loop; it reads GLGDRHAMN. The activation loop stretch occupies residues 3698–3722; sequence HIDLGVAFEQGLMLKTPERVPFRLT. One can recognise an FATC domain in the interval 3824–3856; it reads EMRSIHGQAQQLIQDAIDTDRLSHMFPGWGAWM.

This sequence belongs to the PI3/PI4-kinase family. Interacts with RUG3. As to expression, ubiquitously expressed at low levels with slightly higher levels in flower buds.

The protein resides in the nucleus. It catalyses the reaction L-seryl-[protein] + ATP = O-phospho-L-seryl-[protein] + ADP + H(+). It carries out the reaction L-threonyl-[protein] + ATP = O-phospho-L-threonyl-[protein] + ADP + H(+). Its function is as follows. Serine/threonine protein kinase which activates checkpoint signaling upon genotoxic stresses such as ionizing radiation (IR) or DNA replication stalling. Plays a central role in the perception and response to both stress-induced damage in somatic cells and developmentally programmed DNA damage during meiosis. Recognizes the substrate consensus sequence [ST]-Q. Phosphorylates histone variant H2AX to form H2AXS139ph at double strand breaks (DSBs), thereby regulating DNA damage response mechanism. Involved in transcriptional regulation of RAD51, PARP1, GR1, and LIG4 in response to DNA double strand breaks. Plays a dual role by activating the DNA damage response at dysfunctional telomeres and yet preventing this activation at functional telomeres. Not required for telomere length homeostasis. Regulates DNA damage response (DDR) synergistically with RUG3. Together with RUG3, involved in the splicing of the ND2/NAD2 mRNA. The protein is Serine/threonine-protein kinase ATM of Arabidopsis thaliana (Mouse-ear cress).